A 142-amino-acid polypeptide reads, in one-letter code: Hemoglobin subunit alpha (142 aa).

The Globin domain occupies 2–142 (VLSAADKNNV…VSTVLTSKYR (141 aa)). Phosphoserine is present on S4. K8 and K12 each carry N6-succinyllysine. Position 17 is an N6-acetyllysine; alternate (K17). The residue at position 17 (K17) is an N6-succinyllysine; alternate. Y25 carries the phosphotyrosine modification. Residue S36 is modified to Phosphoserine. K41 bears the N6-succinyllysine mark. S50 is modified (phosphoserine). H59 is a binding site for O2. H88 is a binding site for heme b. T109 is modified (phosphothreonine). Residues S125 and S132 each carry the phosphoserine modification. Residues T135 and T138 each carry the phosphothreonine modification. S139 carries the post-translational modification Phosphoserine.

Belongs to the globin family. In terms of assembly, heterotetramer of two alpha chains and two beta chains. As to expression, red blood cells.

Involved in oxygen transport from the lung to the various peripheral tissues. Functionally, hemopressin acts as an antagonist peptide of the cannabinoid receptor CNR1. Hemopressin-binding efficiently blocks cannabinoid receptor CNR1 and subsequent signaling. The chain is Hemoglobin subunit alpha (HBA) from Cavia porcellus (Guinea pig).